Here is a 580-residue protein sequence, read N- to C-terminus: Opioid growth factor receptor (580 aa).

The residue at position 1 (methionine 1) is an N-acetylmethionine. The segment covering 1 to 38 has biased composition (acidic residues); sequence MDDPDCDSTWEEESEEDGEDGQADDTTDEDTGDDDGDA. Disordered stretches follow at residues 1-44 and 285-390; these read MDDP…ARPS and FKPQ…VSEV. Positions 257-286 match the Bipartite nuclear localization signal motif; it reads RRELVYFAWEHFKPRREFVWGPRDKLRRFK. The span at 300-310 shows a compositional bias: basic and acidic residues; sequence ADKDEGSRDPS. Residues serine 327, serine 361, serine 365, and serine 403 each carry the phosphoserine modification. The segment covering 352–374 has biased composition (basic and acidic residues); that stretch reads NQRDEAKSLSPKESKKRKLEGNR. The tract at residues 405 to 580 is disordered; it reads ISQEPREAEP…IEASAEPPKP (176 aa). 8 consecutive repeat copies span residues 467-475, 476-484, 485-493, 494-502, 503-511, 512-520, 521-529, and 530-538. The 8 X approximate tandem repeats stretch occupies residues 467 to 538; sequence GPEDSNSQVG…VGPEDPNSQV (72 aa). Positions 489–538 are enriched in polar residues; that stretch reads PNSQVGLEDPNSQVGPEDPNSQVGPEDPNSQVGPEDPNSQVGPEDPNSQV. 2 positions are modified to phosphoserine: serine 548 and serine 555.

It belongs to the opioid growth factor receptor family. In terms of tissue distribution, highly expressed in 6-day old cerebellum and brain. Lower expressed in adult cerebellum. The protein is detected in germinal cells of the cerebellum, in neurons of the deep cerebellar nuclei and in the glia in the medullary layer.

The protein resides in the cytoplasm. The protein localises to the perinuclear region. Its subcellular location is the nucleus. Its function is as follows. Receptor for opioid growth factor (OGF), also known as Met-enkephalin. Seems to be involved in growth regulation. The protein is Opioid growth factor receptor (Ogfr) of Rattus norvegicus (Rat).